Consider the following 85-residue polypeptide: Large ribosomal subunit protein bL27 (85 aa).

The segment at 1–21 is disordered; the sequence is MAHKKAGGSTRNGRDSNAQRL. Over residues 9–19 the composition is skewed to polar residues; it reads STRNGRDSNAQ.

It belongs to the bacterial ribosomal protein bL27 family.

The chain is Large ribosomal subunit protein bL27 from Pectobacterium carotovorum subsp. carotovorum (strain PC1).